We begin with the raw amino-acid sequence, 921 residues long: Protein translocase subunit SecA (921 aa).

Residues Q87, 105-109 (GEGKT), and D515 contribute to the ATP site. The interval 872 to 901 (DMEVAGSTGDRGAALDIQPAPVRSGPKIGR) is disordered. Residues C905, C907, C916, and C917 each contribute to the Zn(2+) site.

It belongs to the SecA family. Monomer and homodimer. Part of the essential Sec protein translocation apparatus which comprises SecA, SecYEG and auxiliary proteins SecDF-YajC and YidC. Zn(2+) is required as a cofactor.

It localises to the cell inner membrane. Its subcellular location is the cytoplasm. The enzyme catalyses ATP + H2O + cellular proteinSide 1 = ADP + phosphate + cellular proteinSide 2.. Its function is as follows. Part of the Sec protein translocase complex. Interacts with the SecYEG preprotein conducting channel. Has a central role in coupling the hydrolysis of ATP to the transfer of proteins into and across the cell membrane, serving both as a receptor for the preprotein-SecB complex and as an ATP-driven molecular motor driving the stepwise translocation of polypeptide chains across the membrane. The protein is Protein translocase subunit SecA of Polynucleobacter asymbioticus (strain DSM 18221 / CIP 109841 / QLW-P1DMWA-1) (Polynucleobacter necessarius subsp. asymbioticus).